Here is a 307-residue protein sequence, read N- to C-terminus: Ribosomal RNA small subunit methyltransferase H (307 aa).

S-adenosyl-L-methionine is bound by residues 34 to 36, Asp-54, Phe-79, Asp-101, and Gln-108; that span reads GGH.

This sequence belongs to the methyltransferase superfamily. RsmH family.

Its subcellular location is the cytoplasm. It carries out the reaction cytidine(1402) in 16S rRNA + S-adenosyl-L-methionine = N(4)-methylcytidine(1402) in 16S rRNA + S-adenosyl-L-homocysteine + H(+). In terms of biological role, specifically methylates the N4 position of cytidine in position 1402 (C1402) of 16S rRNA. In Vesicomyosocius okutanii subsp. Calyptogena okutanii (strain HA), this protein is Ribosomal RNA small subunit methyltransferase H.